The chain runs to 55 residues: Locustin (55 aa).

4 disulfide bridges follow: Cys-5-Cys-40, Cys-7-Cys-36, Cys-10-Cys-32, and Cys-17-Cys-54.

As to quaternary structure, monomer. As to expression, stored in hemocyte granules and secreted into the hemolymph.

It is found in the secreted. In terms of biological role, has antibacterial activity against Gram-positive bacterium M.luteus. The polypeptide is Locustin (Locusta migratoria (Migratory locust)).